Consider the following 825-residue polypeptide: Protein SEY1 homolog 2 (825 aa).

Residues 1–21 (MDEVSPTKHFTSKPLLPTKTP) form a disordered region. At 1-728 (MDEVSPTKHF…EKENSEIKYQ (728 aa)) the chain is on the cytoplasmic side. The 223-residue stretch at 83 to 305 (GMDYNAVGIL…FLPQYNKEIP (223 aa)) folds into the GB1/RHD3-type G domain. 93-100 (GAQSSGKS) contacts GTP. Residues 373 to 397 (KVFTKQIDAALERYKEVTERYMETI) are a coiled coil. A helical membrane pass occupies residues 729–749 (IPLYLIVLVVFFGFDEFIAIL). The Lumenal portion of the chain corresponds to 750–752 (TNP). The chain crosses the membrane as a helical span at residues 753–773 (LLFILTLIIGGGVYIGYKLNL). Over 774 to 825 (GGVAKNYIQYLLSMSLSSTMEYLRTIPFFTPLIDKVWPKDDNNTEETQEEIK) the chain is Cytoplasmic.

It belongs to the TRAFAC class dynamin-like GTPase superfamily. GB1/RHD3 GTPase family. RHD3 subfamily.

The protein resides in the endoplasmic reticulum membrane. Functionally, probable GTP-binding protein that may be involved in cell development. This Entamoeba histolytica (strain ATCC 30459 / HM-1:IMSS / ABRM) protein is Protein SEY1 homolog 2.